The primary structure comprises 505 residues: RNA-splicing ligase RtcB homolog (505 aa).

Mn(2+) contacts are provided by D119, C122, H227, and H259. 226-230 is a GMP binding site; sequence NHYAE. At S300 the chain carries Phosphoserine. Residue H353 coordinates Mn(2+). GMP is bound by residues 353 to 354, 402 to 405, S409, and 428 to 431; these read HN, GGTM, and HGAG. H428 serves as the catalytic GMP-histidine intermediate. K496 participates in a covalent cross-link: Glycyl lysine isopeptide (Lys-Gly) (interchain with G-Cter in SUMO2). K504 provides a ligand contact to GMP.

Belongs to the RtcB family. As to quaternary structure, catalytic component of the tRNA-splicing ligase complex. It depends on Mn(2+) as a cofactor.

It localises to the nucleus. The protein localises to the cytoplasm. It carries out the reaction a 3'-end 3'-phospho-ribonucleotide-RNA + a 5'-end dephospho-ribonucleoside-RNA + GTP = a ribonucleotidyl-ribonucleotide-RNA + GMP + diphosphate. The catalysed reaction is a 3'-end 2',3'-cyclophospho-ribonucleotide-RNA + a 5'-end dephospho-ribonucleoside-RNA + GTP + H2O = a ribonucleotidyl-ribonucleotide-RNA + GMP + diphosphate + H(+). In terms of biological role, catalytic subunit of the tRNA-splicing ligase complex that acts by directly joining spliced tRNA halves to mature-sized tRNAs by incorporating the precursor-derived splice junction phosphate into the mature tRNA as a canonical 3',5'-phosphodiester. May act as an RNA ligase with broad substrate specificity, and may function toward other RNAs. The protein is RNA-splicing ligase RtcB homolog of Bos taurus (Bovine).